The chain runs to 495 residues: Glutamyl-tRNA(Gln) amidotransferase subunit A (495 aa).

Residues K75 and S150 each act as charge relay system in the active site. The active-site Acyl-ester intermediate is the S174.

This sequence belongs to the amidase family. GatA subfamily. Heterotrimer of A, B and C subunits.

It carries out the reaction L-glutamyl-tRNA(Gln) + L-glutamine + ATP + H2O = L-glutaminyl-tRNA(Gln) + L-glutamate + ADP + phosphate + H(+). Its function is as follows. Allows the formation of correctly charged Gln-tRNA(Gln) through the transamidation of misacylated Glu-tRNA(Gln) in organisms which lack glutaminyl-tRNA synthetase. The reaction takes place in the presence of glutamine and ATP through an activated gamma-phospho-Glu-tRNA(Gln). The sequence is that of Glutamyl-tRNA(Gln) amidotransferase subunit A from Paraburkholderia xenovorans (strain LB400).